The primary structure comprises 458 residues: Phosphoglucosamine mutase (458 aa).

Ser108 serves as the catalytic Phosphoserine intermediate. Mg(2+) is bound by residues Ser108, Asp247, Asp249, and Asp251. Ser108 is modified (phosphoserine).

Belongs to the phosphohexose mutase family. Requires Mg(2+) as cofactor. In terms of processing, activated by phosphorylation.

The catalysed reaction is alpha-D-glucosamine 1-phosphate = D-glucosamine 6-phosphate. Functionally, catalyzes the conversion of glucosamine-6-phosphate to glucosamine-1-phosphate. The protein is Phosphoglucosamine mutase of Nitrosomonas eutropha (strain DSM 101675 / C91 / Nm57).